Here is a 485-residue protein sequence, read N- to C-terminus: NADH-quinone oxidoreductase subunit N (485 aa).

Transmembrane regions (helical) follow at residues 8 to 28, 35 to 55, 71 to 91, 105 to 125, 127 to 147, 159 to 179, 203 to 223, 235 to 255, 271 to 291, 297 to 317, 326 to 346, 373 to 393, 408 to 430, and 455 to 475; these read LIALLPLLIVGLTVVVVMLSI, FLNATLSVIGLNAALVSLWFV, GFAMLYTGLVLLASLATCTFA, FYLLVLIAALGGILLANANHL, SLFLGIELISLPLFGLVGYAF, YTILSAAASSFLLFGMALVYA, LLAGFGLMIVGLGFKLSLVPF, PAPVSTFLATASKIAIFGVVM, VVLAIIAFASIIFGNLMALSQ, LLGYSSISHLGYLLVALIALQ, VGVYLVGYLFSSLGAFGVVSL, AAVMTVMMLSLAGIPMTLGFI, WWLVGAVVVGSAIGLYYYLRVAV, and IVVLISALLVLVLGVWPQPLI.

It belongs to the complex I subunit 2 family. NDH-1 is composed of 13 different subunits. Subunits NuoA, H, J, K, L, M, N constitute the membrane sector of the complex.

It is found in the cell inner membrane. It carries out the reaction a quinone + NADH + 5 H(+)(in) = a quinol + NAD(+) + 4 H(+)(out). Its function is as follows. NDH-1 shuttles electrons from NADH, via FMN and iron-sulfur (Fe-S) centers, to quinones in the respiratory chain. The immediate electron acceptor for the enzyme in this species is believed to be ubiquinone. Couples the redox reaction to proton translocation (for every two electrons transferred, four hydrogen ions are translocated across the cytoplasmic membrane), and thus conserves the redox energy in a proton gradient. This Escherichia coli O1:K1 / APEC protein is NADH-quinone oxidoreductase subunit N.